The sequence spans 500 residues: Archaeal-type glutamate synthase [NADPH] (500 aa).

2 4Fe-4S ferredoxin-type domains span residues 7–38 (SKFIVDRIEDRCIKCKVCITQCSFDTHYYDED) and 40–69 (DQIKVRNQNCVGCHRCVTFCPTNALVVRNN). Cys18, Cys21, Cys24, Cys28, Cys49, Cys52, Cys55, and Cys59 together coordinate [4Fe-4S] cluster.

The protein belongs to the glutamate synthase family. FMN is required as a cofactor.

The enzyme catalyses 2 L-glutamate + NADP(+) = L-glutamine + 2-oxoglutarate + NADPH + H(+). The chain is Archaeal-type glutamate synthase [NADPH] from Dehalococcoides mccartyi (strain ATCC BAA-2266 / KCTC 15142 / 195) (Dehalococcoides ethenogenes (strain 195)).